The primary structure comprises 96 residues: MGCCGCGSCGGCGGGCGGCGGGCGGGCGGGCGSCTTCRCYRVGCCSSCCPCCRGCCGGCCSTPVICCCRRTCGSCGCGCGKGCCQQKGCCQKQCCC.

The 14 X 2 AA repeats of CG stretch occupies residues 4 to 80 (CGCGSCGGCG…TCGSCGCGCG (77 aa)).

The protein belongs to the KRTAP type 28 family.

In terms of biological role, in the hair cortex, hair keratin intermediate filaments are embedded in an interfilamentous matrix, consisting of hair keratin-associated proteins (KRTAP), which are essential for the formation of a rigid and resistant hair shaft through their extensive disulfide bond cross-linking with abundant cysteine residues of hair keratins. The matrix proteins include the high-sulfur and high-glycine-tyrosine keratins. The protein is Small cysteine and glycine repeat-containing protein 7 of Homo sapiens (Human).